Consider the following 185-residue polypeptide: Elongation factor P (185 aa).

It belongs to the elongation factor P family.

The protein localises to the cytoplasm. The protein operates within protein biosynthesis; polypeptide chain elongation. Functionally, involved in peptide bond synthesis. Stimulates efficient translation and peptide-bond synthesis on native or reconstituted 70S ribosomes in vitro. Probably functions indirectly by altering the affinity of the ribosome for aminoacyl-tRNA, thus increasing their reactivity as acceptors for peptidyl transferase. The polypeptide is Elongation factor P (Symbiobacterium thermophilum (strain DSM 24528 / JCM 14929 / IAM 14863 / T)).